We begin with the raw amino-acid sequence, 146 residues long: Large ribosomal subunit protein uL15 (146 aa).

Composition is skewed to basic residues over residues methionine 1 to glycine 13 and serine 22 to glycine 38. Positions methionine 1–glycine 38 are disordered.

It belongs to the universal ribosomal protein uL15 family. Part of the 50S ribosomal subunit.

Functionally, binds to the 23S rRNA. In Methanothermobacter thermautotrophicus (strain ATCC 29096 / DSM 1053 / JCM 10044 / NBRC 100330 / Delta H) (Methanobacterium thermoautotrophicum), this protein is Large ribosomal subunit protein uL15.